The chain runs to 1705 residues: Protein TIC 214 (1705 aa).

The next 5 helical transmembrane spans lie at 18-38 (IINSVVVVGLYYGFLTTFSIG), 67-87 (FITGQLIMFISIYYAPLHLAL), 127-147 (LSIQCVFLNNLIFQLLNHFIL), 175-195 (VGWIIGHILFMKWVGLLLVWI), and 218-238 (SMSMAGIFSIFLLVTCVHYLG).

It belongs to the TIC214 family. In terms of assembly, part of the Tic complex.

It is found in the plastid. Its subcellular location is the chloroplast inner membrane. In terms of biological role, involved in protein precursor import into chloroplasts. May be part of an intermediate translocation complex acting as a protein-conducting channel at the inner envelope. This is Protein TIC 214 from Helianthus annuus (Common sunflower).